The chain runs to 310 residues: MGKRRCVPPLEPKLAAGCCGVKKPKLSGSGTHSHGNQSTTVPGSSSGPLQNHQHVDSSSGRENVSDLTLGPGNSPITRMNPASGALSPLPRPNGTANTTKNLVVTAEMCCYCFDVLYCHLYGFPQPRLPRFTNDPYPLFVTWKTGRDKRLRGCIGTFSAMNLHSGLREYTLTSALKDSRFPPLTREELPKLFCSVSLLTNFEDASDYLDWEVGVHGIRIEFINEKGVKRTATYLPEVAKEQDWDQIQTIDSLLRKGGFKAPITSEFRKTIKLTRYRSEKVTISYAEYIASRQHCFQNGTLHAPPLYNHYS.

The segment at 26 to 95 (LSGSGTHSHG…LSPLPRPNGT (70 aa)) is disordered. Residues 28-66 (GSGTHSHGNQSTTVPGSSSGPLQNHQHVDSSSGRENVSD) show a composition bias toward polar residues. Residue serine 74 is modified to Phosphoserine. Residues 97–291 (NTTKNLVVTA…ISYAEYIASR (195 aa)) form the AMMECR1 domain.

This chain is AMMECR1-like protein (AMMECR1L), found in Homo sapiens (Human).